The following is a 392-amino-acid chain: BURP domain protein RD22 (392 aa).

An N-terminal signal peptide occupies residues 1 to 22 (MAIRLPLICLLGSFMVVAIAAD). TXV repeat units follow at residues 56-58 (TNV), 78-80 (TAV), 100-102 (THV), and 125-127 (TDV). The interval 57-164 (NVQVGKGGVN…PFVYNYAAKE (108 aa)) is 5 X approximate repeats. Positions 61–136 (GKGGVNVNTH…VGVGKGGVTV (76 aa)) are disordered. Residues 94-114 (GKPGGGTHVSVGSGKGHGGGV) show a composition bias toward gly residues. Residues 176–392 (FFLEKDLVRG…PETHVVWFSY (217 aa)) enclose the BURP domain.

Expressed in seed. Highest expression in leaves and guard cells.

Its function is as follows. Acts to suppress chlorophyll degradation under moisture stress. This chain is BURP domain protein RD22, found in Arabidopsis thaliana (Mouse-ear cress).